The primary structure comprises 539 residues: Cytochrome P450 monooxygenase buaD (539 aa).

A signal peptide spans 1–16 (MLVPVLTLLGTLTATG). N120 is a glycosylation site (N-linked (GlcNAc...) asparagine). Residue C478 coordinates heme. N-linked (GlcNAc...) asparagine glycosylation occurs at N520.

It belongs to the cytochrome P450 family. Heme serves as cofactor.

The protein operates within mycotoxin biosynthesis. Functionally, cytochrome P450 monooxygenase; part of the gene cluster that mediates the biosynthesis of burnettramic acids, an unusual class of bolaamphiphilic pyrrolizidinediones that display potent antibacterial, antifungal, and cytotoxic activities. The first step of the biosynthesis of burnettramic acids is the hydroxylation of proline by the proline hydroxylase buaE to generate 4-hydroxyproline. The PKS-NRPS buaA and trans-enoyl reductase buaC construct the highly reduced polyketide chain, and the condensation (C) domain of buaA then catalyzes the amide bond formation with the activated 4-hydroxyproline. This is followed by the R domain releasing the nascent polyketide-peptide directly via a Dieckmann condensation to afford a tetramic acid fused to the hydroxyproline, generating the bicyclic pyrrolidinedione moiety. The cytochrome P450 monooxygenases buaD and buaG are likely responsible for the multiple hydroxylations on the polyketide chain and its terminus, although in the heterologous context, buaD does not appear to be required. Therefore, while buaG may be a multifunctional cytochrome P450 monooxygenase, it cannot be ruled out that the two secondary alcohols on the polyketide chain could have an acetate origin. Finally, the glycosyltransferase buaB transfers beta-D-mannose to the aglycone burnettramic acid A to form burnettramic acid A. Burnettramic acid B is a minor cis-pyrrolizidine epimer of burnettramic acid A and it is likely that small amounts of it form naturally in acidic environments. This Petromyces alliaceus (Aspergillus alliaceus) protein is Cytochrome P450 monooxygenase buaD.